The chain runs to 302 residues: Methionyl-tRNA formyltransferase (302 aa).

108 to 111 provides a ligand contact to (6S)-5,6,7,8-tetrahydrofolate; that stretch reads SLLP.

It belongs to the Fmt family.

The catalysed reaction is L-methionyl-tRNA(fMet) + (6R)-10-formyltetrahydrofolate = N-formyl-L-methionyl-tRNA(fMet) + (6S)-5,6,7,8-tetrahydrofolate + H(+). Attaches a formyl group to the free amino group of methionyl-tRNA(fMet). The formyl group appears to play a dual role in the initiator identity of N-formylmethionyl-tRNA by promoting its recognition by IF2 and preventing the misappropriation of this tRNA by the elongation apparatus. The protein is Methionyl-tRNA formyltransferase of Cereibacter sphaeroides (strain ATCC 17025 / ATH 2.4.3) (Rhodobacter sphaeroides).